The chain runs to 305 residues: Olfactory receptor 4B13 (305 aa).

The Extracellular portion of the chain corresponds to methionine 1–cysteine 25. Asparagine 6 is a glycosylation site (N-linked (GlcNAc...) asparagine). The chain crosses the membrane as a helical span at residues phenylalanine 26–alanine 46. Topologically, residues valine 47–serine 55 are cytoplasmic. The chain crosses the membrane as a helical span at residues proline 56–valine 76. The Extracellular portion of the chain corresponds to proline 77–cysteine 95. Residues cysteine 95 and cysteine 187 are joined by a disulfide bond. A helical transmembrane segment spans residues leucine 96–methionine 116. Residues alanine 117–methionine 141 lie on the Cytoplasmic side of the membrane. The helical transmembrane segment at leucine 142–isoleucine 162 threads the bilayer. Residues proline 163 to glycine 202 lie on the Extracellular side of the membrane. Residues leucine 203 to leucine 223 form a helical membrane-spanning segment. At arginine 224–serine 236 the chain is on the cytoplasmic side. Residues threonine 237–methionine 257 form a helical membrane-spanning segment. Residues arginine 258–aspartate 266 lie on the Extracellular side of the membrane. Residues lysine 267–leucine 287 traverse the membrane as a helical segment. Over arginine 288–serine 305 the chain is Cytoplasmic.

This sequence belongs to the G-protein coupled receptor 1 family.

The protein resides in the cell membrane. Its function is as follows. Odorant receptor. The chain is Olfactory receptor 4B13 from Mus musculus (Mouse).